Consider the following 38-residue polypeptide: Large ribosomal subunit protein bL36 (38 aa).

The protein belongs to the bacterial ribosomal protein bL36 family.

In Psychrobacter cryohalolentis (strain ATCC BAA-1226 / DSM 17306 / VKM B-2378 / K5), this protein is Large ribosomal subunit protein bL36.